The sequence spans 283 residues: tRNA pseudouridine synthase A (283 aa).

The active-site Nucleophile is Asp73. Positions 120–124 (FHARF) are RNA binding. Tyr131 contributes to the substrate binding site. The interval 181–185 (QCQSR) is interaction with tRNA.

It belongs to the tRNA pseudouridine synthase TruA family. As to quaternary structure, homodimer.

The enzyme catalyses uridine(38/39/40) in tRNA = pseudouridine(38/39/40) in tRNA. Its function is as follows. Formation of pseudouridine at positions 38, 39 and 40 in the anticodon stem and loop of transfer RNAs. The sequence is that of tRNA pseudouridine synthase A from Pectobacterium atrosepticum (strain SCRI 1043 / ATCC BAA-672) (Erwinia carotovora subsp. atroseptica).